A 710-amino-acid polypeptide reads, in one-letter code: Choline transporter-like protein 5 (710 aa).

Residues 1–21 form a disordered region; the sequence is MARKRKPPSSQGDPRRYDPDF. Residues 1–32 are Cytoplasmic-facing; sequence MARKRKPPSSQGDPRRYDPDFQGPTAKRTCTD. The chain crosses the membrane as a helical span at residues 33 to 53; sequence VLCCLIFLLFILGYVLLGLLA. Over 54 to 236 the chain is Extracellular; sequence WAHGDPRKMA…KLLEDYATSW (183 aa). N-linked (GlcNAc...) asparagine glycosylation is found at Asn82 and Asn184. A helical membrane pass occupies residues 237-257; that stretch reads KWILIGLTVAMALSWTFLILL. Over 258–260 the chain is Cytoplasmic; it reads RFT. A helical membrane pass occupies residues 261–281; that stretch reads AGFLFWFFIFGVLGIIGYGIW. Over 282–319 the chain is Extracellular; it reads YCFLEYSSIQQRPQSTFWMYGFGIQRRVNMFFHLKETW. The chain crosses the membrane as a helical span at residues 320–340; the sequence is FSMMIILSAIEIIIIIVLIFL. Residues 341 to 345 lie on the Cytoplasmic side of the membrane; the sequence is RTRIQ. The helical transmembrane segment at 346–366 threads the bilayer; it reads VAIILLQEGSKAISYLPSALI. Residues 367 to 368 are Extracellular-facing; sequence YP. A helical membrane pass occupies residues 369–389; sequence VLTFILLSICISYWAVTAVFL. Over 390 to 454 the chain is Cytoplasmic; that stretch reads ATSGVPIFKV…NYILTFQVYN (65 aa). Residues 455 to 475 form a helical membrane-spanning segment; the sequence is LFAFLWLINFVIALGQCALAG. Topologically, residues 476 to 509 are extracellular; the sequence is AFASYYWAMKKPDDIPPYPLFTAFGRAVRYHTGS. The chain crosses the membrane as a helical span at residues 510-530; sequence LAFGSLILASVQMFKVIVEYL. Residues 531–604 lie on the Cytoplasmic side of the membrane; that stretch reads DRRLKKAQNS…KVTVTDEVTY (74 aa). A helical membrane pass occupies residues 605 to 625; the sequence is FVLLLGKVLVSGIVGVLAFLL. The Extracellular segment spans residues 626–643; sequence FTERLQIIVDGPTTLNYY. The chain crosses the membrane as a helical span at residues 644-664; the sequence is WVPFLTLVFGSYMIAHGFFSV. Residues 665-710 lie on the Cytoplasmic side of the membrane; the sequence is YSMCVETIFICFLEDLERNEGSPSRPYFVTPALMNILLEQGKIKKQ.

The protein belongs to the CTL (choline transporter-like) family.

The protein resides in the cell membrane. It carries out the reaction choline(out) + n H(+)(in) = choline(in) + n H(+)(out). Functionally, choline/H+ antiporter. In Mus musculus (Mouse), this protein is Choline transporter-like protein 5 (Slc44a5).